The following is a 259-amino-acid chain: 5'-nucleotidase SurE (259 aa).

4 residues coordinate a divalent metal cation: D8, D9, S40, and N95.

It belongs to the SurE nucleotidase family. It depends on a divalent metal cation as a cofactor.

The protein resides in the cytoplasm. The enzyme catalyses a ribonucleoside 5'-phosphate + H2O = a ribonucleoside + phosphate. In terms of biological role, nucleotidase that shows phosphatase activity on nucleoside 5'-monophosphates. The sequence is that of 5'-nucleotidase SurE from Oleidesulfovibrio alaskensis (strain ATCC BAA-1058 / DSM 17464 / G20) (Desulfovibrio alaskensis).